Consider the following 156-residue polypeptide: ATP synthase subunit b (156 aa).

A helical transmembrane segment spans residues 7–29 (LFGQTIAFAIFVWFCMKFVWPPL).

The protein belongs to the ATPase B chain family. In terms of assembly, F-type ATPases have 2 components, F(1) - the catalytic core - and F(0) - the membrane proton channel. F(1) has five subunits: alpha(3), beta(3), gamma(1), delta(1), epsilon(1). F(0) has three main subunits: a(1), b(2) and c(10-14). The alpha and beta chains form an alternating ring which encloses part of the gamma chain. F(1) is attached to F(0) by a central stalk formed by the gamma and epsilon chains, while a peripheral stalk is formed by the delta and b chains.

The protein resides in the cell inner membrane. F(1)F(0) ATP synthase produces ATP from ADP in the presence of a proton or sodium gradient. F-type ATPases consist of two structural domains, F(1) containing the extramembraneous catalytic core and F(0) containing the membrane proton channel, linked together by a central stalk and a peripheral stalk. During catalysis, ATP synthesis in the catalytic domain of F(1) is coupled via a rotary mechanism of the central stalk subunits to proton translocation. Functionally, component of the F(0) channel, it forms part of the peripheral stalk, linking F(1) to F(0). The protein is ATP synthase subunit b of Ectopseudomonas mendocina (strain ymp) (Pseudomonas mendocina).